Reading from the N-terminus, the 512-residue chain is Serine--tRNA ligase, cytoplasmic (512 aa).

Methionine 1 carries the N-acetylmethionine modification. The interval 9–61 (RVDKGGDPALIRETQEKRFKDPGLVDQLVKADSEWRRCRFRADNLNKLKNLCS) is interaction with tRNA. Position 241 is a phosphoserine (serine 241). Threonine 271 and arginine 302 together coordinate L-serine. Residues 302–304 (RQE) and 318–321 (VHQF) contribute to the ATP site. Lysine 323 carries the N6-acetyllysine modification. Glutamate 325 is an L-serine binding site. 391–394 (ELVS) serves as a coordination point for ATP. L-serine is bound by residues asparagine 427 and threonine 429. Positions 472–512 (KPAPIDQEPSKKQKKQHEGSKKKAKEVTLESQLQNMEVTEA) are disordered. The span at 479–499 (EPSKKQKKQHEGSKKKAKEVT) shows a compositional bias: basic and acidic residues. A Nuclear localization signal motif is present at residues 482–494 (KKQKKQHEGSKKK). Positions 500 to 512 (LESQLQNMEVTEA) are enriched in polar residues.

The protein belongs to the class-II aminoacyl-tRNA synthetase family. Type-1 seryl-tRNA synthetase subfamily. In terms of assembly, homodimer. The tRNA molecule may bind across the dimer. Interacts with SIRT2. Interacts with METTL6; interaction is required for the tRNA N(3)-methylcytidine methyltransferase activity of METTL6.

It is found in the cytoplasm. The protein localises to the nucleus. It catalyses the reaction tRNA(Ser) + L-serine + ATP = L-seryl-tRNA(Ser) + AMP + diphosphate + H(+). The enzyme catalyses tRNA(Sec) + L-serine + ATP = L-seryl-tRNA(Sec) + AMP + diphosphate + H(+). Its pathway is aminoacyl-tRNA biosynthesis; selenocysteinyl-tRNA(Sec) biosynthesis; L-seryl-tRNA(Sec) from L-serine and tRNA(Sec): step 1/1. Catalyzes the attachment of serine to tRNA(Ser) in a two-step reaction: serine is first activated by ATP to form Ser-AMP and then transferred to the acceptor end of tRNA(Ser). Is probably also able to aminoacylate tRNA(Sec) with serine, to form the misacylated tRNA L-seryl-tRNA(Sec), which will be further converted into selenocysteinyl-tRNA(Sec). In the nucleus, binds to the VEGFA core promoter and prevents MYC binding and transcriptional activation by MYC. Recruits SIRT2 to the VEGFA promoter, promoting deacetylation of histone H4 at 'Lys-16' (H4K16). Thereby, inhibits the production of VEGFA and sprouting angiogenesis mediated by VEGFA. In Cricetulus griseus (Chinese hamster), this protein is Serine--tRNA ligase, cytoplasmic (SARS1).